The chain runs to 249 residues: 5'-nucleotidase SurE (249 aa).

A divalent metal cation contacts are provided by aspartate 9, aspartate 10, serine 40, and asparagine 92.

The protein belongs to the SurE nucleotidase family. A divalent metal cation is required as a cofactor.

It localises to the cytoplasm. The enzyme catalyses a ribonucleoside 5'-phosphate + H2O = a ribonucleoside + phosphate. Nucleotidase that shows phosphatase activity on nucleoside 5'-monophosphates. The chain is 5'-nucleotidase SurE from Shewanella sp. (strain MR-4).